The chain runs to 62 residues: Photosystem II reaction center protein Z (62 aa).

Transmembrane regions (helical) follow at residues 8-28 (AVFA…VVFA) and 41-61 (FSGT…NSLI).

It belongs to the PsbZ family. As to quaternary structure, PSII is composed of 1 copy each of membrane proteins PsbA, PsbB, PsbC, PsbD, PsbE, PsbF, PsbH, PsbI, PsbJ, PsbK, PsbL, PsbM, PsbT, PsbY, PsbZ, Psb30/Ycf12, at least 3 peripheral proteins of the oxygen-evolving complex and a large number of cofactors. It forms dimeric complexes.

The protein resides in the plastid. It localises to the chloroplast thylakoid membrane. May control the interaction of photosystem II (PSII) cores with the light-harvesting antenna, regulates electron flow through the 2 photosystem reaction centers. PSII is a light-driven water plastoquinone oxidoreductase, using light energy to abstract electrons from H(2)O, generating a proton gradient subsequently used for ATP formation. This chain is Photosystem II reaction center protein Z, found in Piper cenocladum (Ant piper).